The chain runs to 323 residues: Transaldolase (323 aa).

Catalysis depends on K131, which acts as the Schiff-base intermediate with substrate.

This sequence belongs to the transaldolase family. Type 1 subfamily. As to quaternary structure, homodimer.

It localises to the cytoplasm. It carries out the reaction D-sedoheptulose 7-phosphate + D-glyceraldehyde 3-phosphate = D-erythrose 4-phosphate + beta-D-fructose 6-phosphate. The protein operates within carbohydrate degradation; pentose phosphate pathway; D-glyceraldehyde 3-phosphate and beta-D-fructose 6-phosphate from D-ribose 5-phosphate and D-xylulose 5-phosphate (non-oxidative stage): step 2/3. Its function is as follows. Transaldolase is important for the balance of metabolites in the pentose-phosphate pathway. This Blochmanniella floridana protein is Transaldolase.